The primary structure comprises 834 residues: ATP-dependent DNA helicase fml1 (834 aa).

A Helicase ATP-binding domain is found at 80-248 (IVQKALFENV…NVIDSLHISR (169 aa)). 93–100 (LPTGLGKT) contributes to the ATP binding site. A DEAH box motif is present at residues 196-199 (DEAH). The Helicase C-terminal domain occupies 416-582 (HLERIVTEYF…GLSLSEKSYR (167 aa)). The segment at 650 to 690 (EESPFEICPVTYSIEQEKKLEKYKRVCLRGLDIHRNRRLSQ) is interaction with MHF complex. The interval 738 to 769 (NSTDRDTKQPKMHDFRQPLHPNPMTTLKRKGQ) is disordered. The segment covering 740-754 (TDRDTKQPKMHDFRQ) has biased composition (basic and acidic residues).

It belongs to the DEAD box helicase family. DEAH subfamily. FANCM sub-subfamily.

It localises to the cytoplasm. Its subcellular location is the nucleus. It is found in the nucleolus. It catalyses the reaction ATP + H2O = ADP + phosphate + H(+). Its function is as follows. ATP-dependent DNA helicase involved in DNA damage repair by homologous recombination and in genome maintenance. Capable of unwinding D-loops. Plays a role in limiting crossover recombination during mitotic DNA double-strand break (DSB) repair. Component of a FANCM-MHF complex which promotes gene conversion at blocked replication forks, probably by reversal of the stalled fork. FANCM-MHF also promotes non-crossover recombination in meiotic cells. The chain is ATP-dependent DNA helicase fml1 from Schizosaccharomyces pombe (strain 972 / ATCC 24843) (Fission yeast).